A 269-amino-acid chain; its full sequence is Ribonuclease HII (269 aa).

The 191-residue stretch at 79–269 (TYLAGADEVG…SFLKNILNTF (191 aa)) folds into the RNase H type-2 domain. Positions 85, 86, and 182 each coordinate a divalent metal cation.

This sequence belongs to the RNase HII family. Mn(2+) serves as cofactor. Mg(2+) is required as a cofactor.

The protein localises to the cytoplasm. It carries out the reaction Endonucleolytic cleavage to 5'-phosphomonoester.. Endonuclease that specifically degrades the RNA of RNA-DNA hybrids. In Clostridium novyi (strain NT), this protein is Ribonuclease HII.